The following is a 97-amino-acid chain: MKIRPLHDRVIVKRKEVEAKSAGGIVLTGSAAGKSTRGEILAVGNGRIMENGEVKPLDVKVGDIVIFNDGYGVKSEKIDNEDVLIMSESDILAIVEA.

This sequence belongs to the GroES chaperonin family. As to quaternary structure, heptamer of 7 subunits arranged in a ring. Interacts with the chaperonin GroEL.

Its subcellular location is the cytoplasm. In terms of biological role, together with the chaperonin GroEL, plays an essential role in assisting protein folding. The GroEL-GroES system forms a nano-cage that allows encapsulation of the non-native substrate proteins and provides a physical environment optimized to promote and accelerate protein folding. GroES binds to the apical surface of the GroEL ring, thereby capping the opening of the GroEL channel. This chain is Co-chaperonin GroES, found in Proteus mirabilis (strain HI4320).